The sequence spans 295 residues: MAWIQIRLNSTNEKAEQMSDFLEEIGSVSVTFMDSQDTPIFEPLPGETRLWGNTDVIALFDAETDMAEIVRLLKEAKHLDSNTAYKIEQIEDKDWEREWMDNFHPMQFGKRLWICPSWRDVPDENAVNVMLDPGLAFGTGTHPTTALCLEWLDGLDLKDKSVIDFGCGSGILAIAALKLGAKSAVGIDIDPQAILASRNNAEQNGVADRLQLFLSDEKPSDLKADVVVANILAGPLKELYPIISQLVKPNGDLGLSGILETQAQSVCDAYTQTFALEPVAAREEWCRITGKLKTL.

S-adenosyl-L-methionine is bound by residues threonine 145, glycine 166, aspartate 188, and asparagine 230.

This sequence belongs to the methyltransferase superfamily. PrmA family.

Its subcellular location is the cytoplasm. It carries out the reaction L-lysyl-[protein] + 3 S-adenosyl-L-methionine = N(6),N(6),N(6)-trimethyl-L-lysyl-[protein] + 3 S-adenosyl-L-homocysteine + 3 H(+). In terms of biological role, methylates ribosomal protein L11. This chain is Ribosomal protein L11 methyltransferase, found in Haemophilus influenzae (strain PittEE).